A 289-amino-acid polypeptide reads, in one-letter code: F-box protein PP2-A11 (289 aa).

An F-box domain is found at 23-69; it reads QPGLGDLPESCVALILQNLDPVEICRFSKLNTAFHGASWADFVWESK.

Part of a SCF (ASK-cullin-F-box) protein ligase complex. Interacts with SKP1A/ASK1.

It is found in the nucleus. Its pathway is protein modification; protein ubiquitination. Its function is as follows. Component of SCF(ASK-cullin-F-box) E3 ubiquitin ligase complexes, which may mediate the ubiquitination and subsequent proteasomal degradation of target proteins. This is F-box protein PP2-A11 (PP2A11) from Arabidopsis thaliana (Mouse-ear cress).